A 692-amino-acid chain; its full sequence is MARKTPLNRIRNIGIAAHIDAGKTTTSERILFYTGVSHKIGEVHDGAATMDWMEQEKERGITITSAATTCFWKDHQINLIDTPGHVDFTIEVERSMRVLDGAVSVFCSVGGVQPQSETVWRQANKYGVPRIVFVNKMDRIGANFYNVENQIKLRLKANPVPINIPIGAEDTFIGVIDLVQMKAIVWNNETMGSKYDVEEIPSDLLEKAKQYREKLVEAVAEQDEALMEKYLGGEELSVEEIKKGIKTGCLNMSLVPMLCGSSFKNKGVQTLLDAVIDYLPAPTEVVDIKGIDPKTEEEVFVKSSDDGEFAGLAFKIMTDPFVGQLTFVRVYRGKLESGSYVYNSTKDKKERVGRLLKMHSNKREDIKEVYAGEICAFVGLKDTLTGDTLCDEKNAVVLERMEFPEPVIHIAVEPKTKADQEKMGVALGKLAEEDPSFRVMTQEETGQTLIGGMGELHLEIIVDRLKREFKVEAEIGQPQVAFRETIRSSVSKEHKYAKQSGGRGQYGHVFIKLEPKEPGSGYEFVNEISGGVIPKEYIPAVDKGIQEAMQNGVLAGYPVVDFKVTLYDGSYHDVDSSEMAFKIAGSMAFKEASRAANPVLLEPMMKVEVEVPEEYMGDVIGDLNRRRGQINSMDDRLGLKIVNAFVPLVEMFGYSTDLRSATQGRGTYSMEFDHYGEVPSNIAKEIVEKRKG.

Residues 8–283 (NRIRNIGIAA…AVIDYLPAPT (276 aa)) enclose the tr-type G domain. GTP-binding positions include 17-24 (AHIDAGKT), 81-85 (DTPGH), and 135-138 (NKMD).

The protein belongs to the TRAFAC class translation factor GTPase superfamily. Classic translation factor GTPase family. EF-G/EF-2 subfamily.

It localises to the cytoplasm. Functionally, catalyzes the GTP-dependent ribosomal translocation step during translation elongation. During this step, the ribosome changes from the pre-translocational (PRE) to the post-translocational (POST) state as the newly formed A-site-bound peptidyl-tRNA and P-site-bound deacylated tRNA move to the P and E sites, respectively. Catalyzes the coordinated movement of the two tRNA molecules, the mRNA and conformational changes in the ribosome. This is Elongation factor G from Helicobacter pylori (strain HPAG1).